The chain runs to 88 residues: Cell division topological specificity factor (88 aa).

Belongs to the MinE family.

Prevents the cell division inhibition by proteins MinC and MinD at internal division sites while permitting inhibition at polar sites. This ensures cell division at the proper site by restricting the formation of a division septum at the midpoint of the long axis of the cell. The protein is Cell division topological specificity factor of Aeromonas salmonicida (strain A449).